The following is a 354-amino-acid chain: MYRSLLHNVSLKATSRIIRRSVSSQAKGASGKRKQKAKEMESSHDRNRRWTSLGNQAEGRDPHKCSSFKVVSYNILAQDLLLEHLFLYVGIPHEFLSWQRRQQNLLRELLKLDPDILCLQEMQFDHLPVLVQRLRMGNGKKLAYVYKKKTGCRTDGCAIVYDSSKFELLDHQAVELYDQAVALLNRDNVALFARFRFKKQQEQQKEFVVATTHLLFNTKRSDVRCAQVERILEELQSFSTDTPIVLTGDFNSLPDSSPIEFLVGKNGDVDSTACPEPLHFEIIDSGEGTASTYQNEWVIVDYILRSLGSRSRHKLLPLSVYSLPSINRCIGAGQIPNYRLGSDHYALGAVFTVV.

The tract at residues Val22 to Gly59 is disordered.

This sequence belongs to the CCR4/nocturin family. In terms of tissue distribution, ubiquitously expressed in embryos.

The polypeptide is Protein angel (angel) (Drosophila melanogaster (Fruit fly)).